We begin with the raw amino-acid sequence, 281 residues long: tRNA N(3)-cytidine methyltransferase METTL8, mitochondrial (281 aa).

The N-terminal 22 residues, 1 to 22 (MNVIWRSCICRLRQGKVPHRCQ), are a transit peptide targeting the mitochondrion. Lys80 participates in a covalent cross-link: Glycyl lysine isopeptide (Lys-Gly) (interchain with G-Cter in SUMO). Positions 89 and 93 each coordinate S-adenosyl-L-methionine. The span at 139-151 (RTQGTETHCQESF) shows a compositional bias: polar residues. A disordered region spans residues 139 to 180 (RTQGTETHCQESFVSPEPGSRGRSAPDPDLEEYSKGPGKTEP). S-adenosyl-L-methionine-binding residues include Gly194, Asp220, and Asp246.

This sequence belongs to the methyltransferase superfamily. METL family. In terms of assembly, interacts with EP300. As to expression, absent in embryonic lung but is induced in a fibroblast cell line by stretch. Expressed in undifferentiated progenitor cells, while its expression is inhibited by stretch. In terms of tissue distribution, absent in undifferentiated embryonic lung mesenchymal cells, but expression is induced by stretch. As to expression, expressed in mature adipose tissue.

Its subcellular location is the mitochondrion. It is found in the cytoplasm. The protein resides in the nucleus. It carries out the reaction cytidine(32) in tRNA(Ser) + S-adenosyl-L-methionine = N(3)-methylcytidine(32) in tRNA(Ser) + S-adenosyl-L-homocysteine + H(+). The enzyme catalyses cytidine(32) in tRNA(Thr) + S-adenosyl-L-methionine = N(3)-methylcytidine(32) in tRNA(Thr) + S-adenosyl-L-homocysteine + H(+). It catalyses the reaction a cytidine in mRNA + S-adenosyl-L-methionine = an N(3)-methylcytidine in mRNA + S-adenosyl-L-homocysteine + H(+). In terms of biological role, mitochondrial S-adenosyl-L-methionine-dependent methyltransferase that mediates N(3)-methylcytidine modification of residue 32 of the tRNA anticodon loop of mitochondrial tRNA(Ser)(UCN) and tRNA(Thr). N(3)-methylcytidine methylation modification regulates mitochondrial translation efficiency and is required for activity of the respiratory chain. N(3)-methylcytidine methylation of mitochondrial tRNA(Ser)(UCN) requires the formation of N(6)-dimethylallyladenosine(37) (i6A37) by TRIT1 as prerequisite. May also mediate N(3)-methylcytidine modification of mRNAs. The existence of N(3)-methylcytidine modification on mRNAs is however unclear, and additional evidences are required to confirm the role of the N(3)-methylcytidine-specific mRNA methyltransferase activity of METTL8 in vivo. Overexpression in lung progenitor cells stimulates smooth muscle-specific gene expression and suppresses adipogenic gene expression. Functionally, stimulates adipogenesis. The sequence is that of tRNA N(3)-cytidine methyltransferase METTL8, mitochondrial from Mus musculus (Mouse).